A 189-amino-acid polypeptide reads, in one-letter code: uncharacterized protein (189 aa).

A signal peptide spans 1-19; the sequence is MNKLTILFLILALISVIYA. The segment at 24-189 is disordered; it reads PSSSEDSSSN…GSGSSGTVYY (166 aa). Positions 25–69 are enriched in low complexity; the sequence is SSSEDSSSNDSNSQVTGSQSYSGSQSDSNSGSESHTINTGSSYSG. The segment covering 70-101 has biased composition (gly residues); that stretch reads SGSGSSGISGGSGSGSGSGSGSGSGSGSGSGA. The segment covering 102–142 has biased composition (low complexity); that stretch reads VSGSQSGSGAVSGSQSGSGAVSGSQSGVQTGSQSGAGSASG. Over residues 144-157 the composition is skewed to polar residues; the sequence is FTGNPSGSQSQEIN. Over residues 165–183 the composition is skewed to gly residues; that stretch reads SGSGAPTGAATGSGSGSGS.

This is an uncharacterized protein from Dictyostelium discoideum (Social amoeba).